A 447-amino-acid polypeptide reads, in one-letter code: UPF0210 protein Lreu_0940 (447 aa).

This sequence belongs to the UPF0210 family. Homodimer.

This is UPF0210 protein Lreu_0940 from Limosilactobacillus reuteri (strain DSM 20016) (Lactobacillus reuteri).